A 272-amino-acid chain; its full sequence is HMP-PP phosphatase (272 aa).

The active-site Nucleophile is Asp8. Residues Asp8, Asp10, and Asp212 each contribute to the Mg(2+) site.

The protein belongs to the HAD-like hydrolase superfamily. Cof family. Mg(2+) is required as a cofactor.

The enzyme catalyses 4-amino-2-methyl-5-(diphosphooxymethyl)pyrimidine + H2O = 4-amino-2-methyl-5-(phosphooxymethyl)pyrimidine + phosphate + H(+). In terms of biological role, catalyzes the hydrolysis of 4-amino-2-methyl-5-hydroxymethylpyrimidine pyrophosphate (HMP-PP) to 4-amino-2-methyl-5-hydroxymethylpyrimidine phosphate (HMP-P). The polypeptide is HMP-PP phosphatase (Escherichia coli O157:H7).